A 542-amino-acid polypeptide reads, in one-letter code: Calcium-dependent protein kinase 15 (542 aa).

Residues 1–73 are disordered; that stretch reads MGARASRHRQ…QAPQQAAAED (73 aa). Glycine 2 is lipidated: N-myristoyl glycine. Positions 12–21 are enriched in low complexity; it reads PDQSQSQSPS. The segment covering 22–40 has biased composition (basic residues); it reads PHHKHHHHHQTTRAPKPKP. The segment covering 41-60 has biased composition (pro residues); that stretch reads KPQPPPPQQPRSQPPPPPRH. Over residues 61-71 the composition is skewed to low complexity; the sequence is QPQQAPQQAAA. The 259-residue stretch at 90-348 folds into the Protein kinase domain; the sequence is YTFGRELGRG…AAEILNHPWI (259 aa). ATP-binding positions include 96-104 and lysine 119; that span reads LGRGQFGVT. The active-site Proton acceptor is the aspartate 214. The segment at 354–384 is autoinhibitory domain; sequence APDKPLDITVISRMKQFRAMNKLKKVALKVV. EF-hand domains follow at residues 391–426, 427–462, 463–497, and 498–533; these read EEIVGLKEMFKSLDTDNSGTITLEELRAGLPKLGTK, ISESELRQLMEAADVDGNGSIDYVEFISATMHMNRL, EKEDHIYKAFEYFDKDHSGFITVDELEEALTKYDM, and GDEATIKEIIAEVDTDHDGRINYQEFVAMMKNNSPE. Positions 404, 406, 408, 410, 415, 440, 442, 444, 446, 451, 476, 478, 480, 487, 511, 513, 515, 517, and 522 each coordinate Ca(2+).

Belongs to the protein kinase superfamily. Ser/Thr protein kinase family. CDPK subfamily.

It localises to the membrane. It catalyses the reaction L-seryl-[protein] + ATP = O-phospho-L-seryl-[protein] + ADP + H(+). It carries out the reaction L-threonyl-[protein] + ATP = O-phospho-L-threonyl-[protein] + ADP + H(+). Its activity is regulated as follows. Activated by calcium. Autophosphorylation may play an important role in the regulation of the kinase activity. Its function is as follows. May play a role in signal transduction pathways that involve calcium as a second messenger. In Oryza sativa subsp. japonica (Rice), this protein is Calcium-dependent protein kinase 15.